The primary structure comprises 153 residues: Ubiquitin-conjugating enzyme E2 35 (153 aa).

One can recognise a UBC core domain in the interval 5–151 (NLPRRIIKET…AKEWTRLYAS (147 aa)). Residue cysteine 89 is the Glycyl thioester intermediate of the active site.

Belongs to the ubiquitin-conjugating enzyme family. In terms of assembly, interacts with yeast and human Mms2, with the RING domain of RGLG2 and with UEV1A, UEV1B, UEV1C and UEV1D. Ubiquitously expressed at low level. Mainly expressed in the vasculature.

It carries out the reaction S-ubiquitinyl-[E1 ubiquitin-activating enzyme]-L-cysteine + [E2 ubiquitin-conjugating enzyme]-L-cysteine = [E1 ubiquitin-activating enzyme]-L-cysteine + S-ubiquitinyl-[E2 ubiquitin-conjugating enzyme]-L-cysteine.. The protein operates within protein modification; protein ubiquitination. In terms of biological role, catalyzes the synthesis of non-canonical poly-ubiquitin chains that are linked through 'Lys-63'. This type of poly-ubiquitination does not lead to protein degradation by the proteasome. Mediates transcriptional activation of target genes. Required for postreplication repair of UV-damaged DNA and for adapting root developmental programs to suboptimal availability of iron. This Arabidopsis thaliana (Mouse-ear cress) protein is Ubiquitin-conjugating enzyme E2 35 (UBC35).